A 311-amino-acid chain; its full sequence is Malate dehydrogenase (311 aa).

NAD(+)-binding positions include 7 to 13 (GAAGGIG) and aspartate 34. Substrate-binding residues include arginine 81 and arginine 87. Residues asparagine 94 and 117-119 (ITN) contribute to the NAD(+) site. Substrate is bound by residues asparagine 119 and arginine 153. The Proton acceptor role is filled by histidine 177. Methionine 227 contributes to the NAD(+) binding site.

It belongs to the LDH/MDH superfamily. MDH type 1 family. In terms of assembly, homodimer.

The catalysed reaction is (S)-malate + NAD(+) = oxaloacetate + NADH + H(+). In terms of biological role, catalyzes the reversible oxidation of malate to oxaloacetate. The chain is Malate dehydrogenase from Shewanella denitrificans (strain OS217 / ATCC BAA-1090 / DSM 15013).